The chain runs to 287 residues: Probable glucose uptake protein GlcU (287 aa).

9 helical membrane passes run 7 to 29 (LIAL…VGGG), 34 to 56 (IRGT…FAKF), 58 to 75 (NPTV…WAFG), 114 to 136 (WSSM…GVAL), 156 to 178 (MGIL…IFGV), 183 to 202 (ALFF…SMNH), 209 to 228 (TALN…FMFY), 233 to 255 (VGVA…GGIF), and 267 to 286 (TGIW…LGNL).

The protein belongs to the GRP transporter (TC 2.A.7.5) family.

It is found in the cell membrane. In terms of biological role, involved in the uptake of glucose. This Staphylococcus aureus (strain COL) protein is Probable glucose uptake protein GlcU (glcU).